We begin with the raw amino-acid sequence, 230 residues long: Phosphoribosylformylglycinamidine synthase subunit PurQ (230 aa).

Positions Lys2–Ile230 constitute a Glutamine amidotransferase type-1 domain. Cys85 acts as the Nucleophile in catalysis. Active-site residues include His202 and Glu204.

In terms of assembly, part of the FGAM synthase complex composed of 1 PurL, 1 PurQ and 2 PurS subunits.

It is found in the cytoplasm. It catalyses the reaction N(2)-formyl-N(1)-(5-phospho-beta-D-ribosyl)glycinamide + L-glutamine + ATP + H2O = 2-formamido-N(1)-(5-O-phospho-beta-D-ribosyl)acetamidine + L-glutamate + ADP + phosphate + H(+). The catalysed reaction is L-glutamine + H2O = L-glutamate + NH4(+). It participates in purine metabolism; IMP biosynthesis via de novo pathway; 5-amino-1-(5-phospho-D-ribosyl)imidazole from N(2)-formyl-N(1)-(5-phospho-D-ribosyl)glycinamide: step 1/2. Part of the phosphoribosylformylglycinamidine synthase complex involved in the purines biosynthetic pathway. Catalyzes the ATP-dependent conversion of formylglycinamide ribonucleotide (FGAR) and glutamine to yield formylglycinamidine ribonucleotide (FGAM) and glutamate. The FGAM synthase complex is composed of three subunits. PurQ produces an ammonia molecule by converting glutamine to glutamate. PurL transfers the ammonia molecule to FGAR to form FGAM in an ATP-dependent manner. PurS interacts with PurQ and PurL and is thought to assist in the transfer of the ammonia molecule from PurQ to PurL. In Methanocaldococcus jannaschii (strain ATCC 43067 / DSM 2661 / JAL-1 / JCM 10045 / NBRC 100440) (Methanococcus jannaschii), this protein is Phosphoribosylformylglycinamidine synthase subunit PurQ.